Reading from the N-terminus, the 360-residue chain is Cytochrome b-c1 complex subunit 2, mitochondrial (360 aa).

The N-terminal 15 residues, 1–15, are a transit peptide targeting the mitochondrion; that stretch reads MLSSRLQFAQQTARK.

This sequence belongs to the peptidase M16 family. UQCRC2/QCR2 subfamily. As to quaternary structure, component of the ubiquinol-cytochrome c oxidoreductase (cytochrome b-c1 complex, complex III, CIII), a multisubunit enzyme composed of 3 respiratory subunits cytochrome b, cytochrome c1 and Rieske protein, 2 core protein subunits, and additional low-molecular weight protein subunits. The complex exists as an obligatory dimer and forms supercomplexes (SCs) in the inner mitochondrial membrane with cytochrome c oxidase (complex IV, CIV).

It localises to the mitochondrion inner membrane. Component of the ubiquinol-cytochrome c oxidoreductase, a multisubunit transmembrane complex that is part of the mitochondrial electron transport chain which drives oxidative phosphorylation. The respiratory chain contains 3 multisubunit complexes succinate dehydrogenase (complex II, CII), ubiquinol-cytochrome c oxidoreductase (cytochrome b-c1 complex, complex III, CIII) and cytochrome c oxidase (complex IV, CIV), that cooperate to transfer electrons derived from NADH and succinate to molecular oxygen, creating an electrochemical gradient over the inner membrane that drives transmembrane transport and the ATP synthase. The cytochrome b-c1 complex catalyzes electron transfer from ubiquinol to cytochrome c, linking this redox reaction to translocation of protons across the mitochondrial inner membrane, with protons being carried across the membrane as hydrogens on the quinol. In the process called Q cycle, 2 protons are consumed from the matrix, 4 protons are released into the intermembrane space and 2 electrons are passed to cytochrome c. This chain is Cytochrome b-c1 complex subunit 2, mitochondrial (QCR2), found in Kluyveromyces lactis (strain ATCC 8585 / CBS 2359 / DSM 70799 / NBRC 1267 / NRRL Y-1140 / WM37) (Yeast).